A 545-amino-acid chain; its full sequence is CWF19-like protein 1 homolog (545 aa).

Positions 306 to 329 (YFYDMDGGRRKRQGGDNNKRDKRP) are disordered.

The protein belongs to the CWF19 family.

The protein is CWF19-like protein 1 homolog of Drosophila melanogaster (Fruit fly).